Reading from the N-terminus, the 199-residue chain is Recombination protein RecR (199 aa).

The C4-type zinc finger occupies 56–71; that stretch reads CAICGNVSEKETCGIC. The Toprim domain maps to 79 to 174; sequence ATICVVEEAK…RVTRLASGLP (96 aa).

It belongs to the RecR family.

Functionally, may play a role in DNA repair. It seems to be involved in an RecBC-independent recombinational process of DNA repair. It may act with RecF and RecO. This Clavibacter michiganensis subsp. michiganensis (strain NCPPB 382) protein is Recombination protein RecR.